The sequence spans 397 residues: Tryptophan synthase beta chain (397 aa).

Position 88 is an N6-(pyridoxal phosphate)lysine (K88).

The protein belongs to the TrpB family. In terms of assembly, tetramer of two alpha and two beta chains. Pyridoxal 5'-phosphate serves as cofactor.

It catalyses the reaction (1S,2R)-1-C-(indol-3-yl)glycerol 3-phosphate + L-serine = D-glyceraldehyde 3-phosphate + L-tryptophan + H2O. It functions in the pathway amino-acid biosynthesis; L-tryptophan biosynthesis; L-tryptophan from chorismate: step 5/5. In terms of biological role, the beta subunit is responsible for the synthesis of L-tryptophan from indole and L-serine. The chain is Tryptophan synthase beta chain from Shewanella amazonensis (strain ATCC BAA-1098 / SB2B).